A 273-amino-acid chain; its full sequence is Embryonic polyadenylate-binding protein 2 (273 aa).

The tract at residues 22–57 (SSDPEAQGWGAWGRTEKTSLVPRAGSRAGSDKEAEE) is disordered. Residues 143-220 (RSVFVGNVDY…RVIKVLPKRT (78 aa)) form the RRM domain.

The protein localises to the cytoplasm. Its function is as follows. Binds the poly(A) tail of mRNA. This is Embryonic polyadenylate-binding protein 2 (Pabpn1l) from Mus musculus (Mouse).